Reading from the N-terminus, the 1009-residue chain is Type VII secretion system accessory factor EsaA (1009 aa).

The next 6 helical transmembrane spans lie at 7 to 27 (IYAL…IFFV), 822 to 842 (ISPT…AYIF), 869 to 889 (VITS…VGLI), 903 to 923 (KFIL…TYLL), 928 to 948 (SIGM…MNNL), and 979 to 999 (IGLA…LNMF).

The protein belongs to the EsaA family. Homodimer. Interacts with EssB.

The protein localises to the cell membrane. In terms of biological role, component of the type VII secretion system (Ess). Provides together with EssB and other components such as EssC and EssE a secretion platform across the cytoplasmic membrane in the host. The chain is Type VII secretion system accessory factor EsaA from Staphylococcus aureus (strain MSSA476).